The following is a 312-amino-acid chain: tRNA dimethylallyltransferase (312 aa).

ATP is bound at residue 10-17 (GPTAVGKT). Substrate is bound at residue 12–17 (TAVGKT). The interval 35-38 (DSMQ) is interaction with substrate tRNA.

The protein belongs to the IPP transferase family. Monomer. Requires Mg(2+) as cofactor.

It catalyses the reaction adenosine(37) in tRNA + dimethylallyl diphosphate = N(6)-dimethylallyladenosine(37) in tRNA + diphosphate. Functionally, catalyzes the transfer of a dimethylallyl group onto the adenine at position 37 in tRNAs that read codons beginning with uridine, leading to the formation of N6-(dimethylallyl)adenosine (i(6)A). The chain is tRNA dimethylallyltransferase from Alkaliphilus metalliredigens (strain QYMF).